We begin with the raw amino-acid sequence, 84 residues long: GTP cyclohydrolase 1 feedback regulatory protein (84 aa).

This sequence belongs to the GFRP family. As to quaternary structure, homopentamer. Forms a complex with GCH1 where a GCH1 homodecamer is sandwiched by two GFRP homopentamers.

Its subcellular location is the nucleus. The protein localises to the nucleus membrane. The protein resides in the cytoplasm. It is found in the cytosol. Its function is as follows. Mediates tetrahydrobiopterin inhibition of GTP cyclohydrolase 1. This Xenopus tropicalis (Western clawed frog) protein is GTP cyclohydrolase 1 feedback regulatory protein (gchfr).